A 146-amino-acid chain; its full sequence is VHLTGDEKSAVAALWSKVNVDEVGGEALGRLLVVYPWTQRFFESFGALSSADAVMGNPKVKAHGKKVLGAFSDGLAHLDNLKGTFAQLSELHCDKLHVDPENFRLLGNVLVCVLARNFGKEFTPQVQAAFQKVVAGVATALAHKYH.

Positions 2-146 (HLTGDEKSAV…VATALAHKYH (145 aa)) constitute a Globin domain. Serine 50 is modified (phosphoserine). Positions 63 and 92 each coordinate heme b.

This sequence belongs to the globin family. Heterotetramer of two delta chains and two alpha chains. As to expression, red blood cells.

The chain is Hemoglobin subunit delta (HBD) from Saimiri sciureus (Common squirrel monkey).